The primary structure comprises 260 residues: Enoyl-[acyl-carrier-protein] reductase [NADH] FabI (260 aa).

NAD(+) contacts are provided by residues Gly-15, 21 to 22 (SI), Gln-42, 66 to 67 (DV), and Met-94. Ala-97 provides a ligand contact to substrate. Active-site proton acceptor residues include Tyr-147 and Tyr-157. NAD(+)-binding positions include Lys-164 and 193-197 (IKTLA).

The protein belongs to the short-chain dehydrogenases/reductases (SDR) family. FabI subfamily. As to quaternary structure, homotetramer.

The enzyme catalyses a 2,3-saturated acyl-[ACP] + NAD(+) = a (2E)-enoyl-[ACP] + NADH + H(+). The protein operates within lipid metabolism; fatty acid biosynthesis. Functionally, catalyzes the reduction of a carbon-carbon double bond in an enoyl moiety that is covalently linked to an acyl carrier protein (ACP). Involved in the elongation cycle of fatty acid which are used in the lipid metabolism. In Rickettsia felis (strain ATCC VR-1525 / URRWXCal2) (Rickettsia azadi), this protein is Enoyl-[acyl-carrier-protein] reductase [NADH] FabI (fabI).